The sequence spans 384 residues: 1-deoxy-D-xylulose 5-phosphate reductoisomerase (384 aa).

7 residues coordinate NADPH: threonine 10, glycine 11, serine 12, isoleucine 13, arginine 37, asparagine 38, and asparagine 124. Lysine 125 contributes to the 1-deoxy-D-xylulose 5-phosphate binding site. Position 126 (glutamate 126) interacts with NADPH. Mn(2+) is bound at residue aspartate 150. 1-deoxy-D-xylulose 5-phosphate contacts are provided by serine 151, glutamate 152, serine 176, and histidine 199. Position 152 (glutamate 152) interacts with Mn(2+). An NADPH-binding site is contributed by glycine 205. The 1-deoxy-D-xylulose 5-phosphate site is built by serine 212, asparagine 217, lysine 218, and glutamate 221. Glutamate 221 serves as a coordination point for Mn(2+).

The protein belongs to the DXR family. Mg(2+) is required as a cofactor. It depends on Mn(2+) as a cofactor.

The catalysed reaction is 2-C-methyl-D-erythritol 4-phosphate + NADP(+) = 1-deoxy-D-xylulose 5-phosphate + NADPH + H(+). Its pathway is isoprenoid biosynthesis; isopentenyl diphosphate biosynthesis via DXP pathway; isopentenyl diphosphate from 1-deoxy-D-xylulose 5-phosphate: step 1/6. Catalyzes the NADPH-dependent rearrangement and reduction of 1-deoxy-D-xylulose-5-phosphate (DXP) to 2-C-methyl-D-erythritol 4-phosphate (MEP). This is 1-deoxy-D-xylulose 5-phosphate reductoisomerase from Clostridium perfringens (strain ATCC 13124 / DSM 756 / JCM 1290 / NCIMB 6125 / NCTC 8237 / Type A).